The sequence spans 56 residues: UPF0434 protein CbuK_1382 (56 aa).

This sequence belongs to the UPF0434 family.

The sequence is that of UPF0434 protein CbuK_1382 from Coxiella burnetii (strain CbuK_Q154) (Coxiella burnetii (strain Q154)).